Reading from the N-terminus, the 319-residue chain is Acetyl-coenzyme A carboxylase carboxyl transferase subunit alpha (319 aa).

The CoA carboxyltransferase C-terminal domain occupies 35–296 (NIDEEVHRLR…KAQLLADLAD (262 aa)).

This sequence belongs to the AccA family. As to quaternary structure, acetyl-CoA carboxylase is a heterohexamer composed of biotin carboxyl carrier protein (AccB), biotin carboxylase (AccC) and two subunits each of ACCase subunit alpha (AccA) and ACCase subunit beta (AccD).

The protein resides in the cytoplasm. The enzyme catalyses N(6)-carboxybiotinyl-L-lysyl-[protein] + acetyl-CoA = N(6)-biotinyl-L-lysyl-[protein] + malonyl-CoA. Its pathway is lipid metabolism; malonyl-CoA biosynthesis; malonyl-CoA from acetyl-CoA: step 1/1. Functionally, component of the acetyl coenzyme A carboxylase (ACC) complex. First, biotin carboxylase catalyzes the carboxylation of biotin on its carrier protein (BCCP) and then the CO(2) group is transferred by the carboxyltransferase to acetyl-CoA to form malonyl-CoA. In Klebsiella pneumoniae (strain 342), this protein is Acetyl-coenzyme A carboxylase carboxyl transferase subunit alpha.